The following is a 689-amino-acid chain: Ribonuclease J (689 aa).

Positions 1–88 are disordered; it reads MTDNNQNNEN…RNYAQEELDS (88 aa). Residues 9–24 are compositionally biased toward basic and acidic residues; it reads ENHENSSENSKADEMR. Over residues 56–78 the composition is skewed to basic residues; sequence HHKKEHRPNKKPNNHHKQKHAKT. N6-acetyllysine is present on residues Lys132 and Lys138. The Zn(2+) site is built by His206, His208, Asp210, His211, His275, and Asp297. Residues Lys321, Lys335, and Lys395 each carry the N6-acetyllysine modification. Residue 498–502 participates in substrate binding; that stretch reads HVSGH. The residue at position 509 (Lys509) is an N6-acetyllysine. His524 is a Zn(2+) binding site. Lys545, Lys632, and Lys647 each carry N6-acetyllysine.

The protein belongs to the metallo-beta-lactamase superfamily. RNA-metabolizing metallo-beta-lactamase-like family. Bacterial RNase J subfamily. Homodimer. Homotetramer; dimer of homodimers. Interacts with RNA helicase RhpA, might be a member of a minimal RNA degradosome complex. Zn(2+) is required as a cofactor. In terms of processing, acetylated on nine lysine residues. Some of the residues are acetylated by multiple different mechanisms. RimL is partially responsible for the acetylation of Lys-321, Lys-395 and Lys-647. HPB8_1270 homolog is partially responsible for the acetylation of Lys-321, Lys-395, Lys-509 and Lys-647. Acetyl-phosphate-mediated non-enzymatic acetylation pathway takes part in the acetylation of Lys-132, Lys-321, Lys-395, Lys-509 and Lys-647. Acetylation of the remaining residues Lys-138, Lys-335, Lys-545 and Lys-632 occurs by a yet undetermined mechanism. Acetylation on a number of these residues is important for growth regulation and proper cell morphology.

It is found in the cytoplasm. Catalytic activity is regulated by the balance between homodimers and homotetramers, with homotetramers being the active forms of this enzyme. Acetylation allosterically regulates the homooligomerization state and hence the catalytic activity. Functionally, an RNase that has 5'-3' exoribonuclease and endoribonuclease activity. Degrades 5'-monophosphorylated ssRNA and dsRNA, considerably more active on ssRNA. Association with RhpA significantly increases the dsRNase activity. Degrades RNA substrate with hairpin structures at both ends with low activity, but presence of RhpA significantly increases the activity on this substrate. Stimulates ATPase activity of RNA helicase RhpA. Involved in stabilization of mRNA but apparently not rRNA. This is Ribonuclease J from Helicobacter pylori (strain ATCC 700392 / 26695) (Campylobacter pylori).